The following is a 795-amino-acid chain: Lon protease (795 aa).

The region spanning 7–213 (SQILVVRGQV…KIIQAGIEDL (207 aa)) is the Lon N-terminal domain. 379–386 (GPPGVGKS) is an ATP binding site. Residues 615–795 (VSLPGIVNGM…YSDIYNKLFS (181 aa)) form the Lon proteolytic domain. Catalysis depends on residues Ser702 and Lys745.

Belongs to the peptidase S16 family. Homohexamer. Organized in a ring with a central cavity.

Its subcellular location is the cytoplasm. The enzyme catalyses Hydrolysis of proteins in presence of ATP.. ATP-dependent serine protease that mediates the selective degradation of mutant and abnormal proteins as well as certain short-lived regulatory proteins. Required for cellular homeostasis and for survival from DNA damage and developmental changes induced by stress. Degrades polypeptides processively to yield small peptide fragments that are 5 to 10 amino acids long. Binds to DNA in a double-stranded, site-specific manner. This is Lon protease from Mycoplasma genitalium (strain ATCC 33530 / DSM 19775 / NCTC 10195 / G37) (Mycoplasmoides genitalium).